The primary structure comprises 301 residues: Oxygen-dependent coproporphyrinogen-III oxidase (301 aa).

Residue serine 90 coordinates substrate. The a divalent metal cation site is built by histidine 94 and histidine 104. Catalysis depends on histidine 104, which acts as the Proton donor. Substrate is bound at residue 106–108 (NVR). Residues histidine 143 and histidine 173 each coordinate a divalent metal cation. Residues 238–273 (YVEFNLVWDRGTLFGLQSGGRTESILMSLPPIVKWR) are important for dimerization. 256 to 258 (GGR) contributes to the substrate binding site.

This sequence belongs to the aerobic coproporphyrinogen-III oxidase family. Homodimer. A divalent metal cation is required as a cofactor.

The protein resides in the cytoplasm. It carries out the reaction coproporphyrinogen III + O2 + 2 H(+) = protoporphyrinogen IX + 2 CO2 + 2 H2O. It functions in the pathway porphyrin-containing compound metabolism; protoporphyrin-IX biosynthesis; protoporphyrinogen-IX from coproporphyrinogen-III (O2 route): step 1/1. In terms of biological role, involved in the heme biosynthesis. Catalyzes the aerobic oxidative decarboxylation of propionate groups of rings A and B of coproporphyrinogen-III to yield the vinyl groups in protoporphyrinogen-IX. This Nitrosomonas eutropha (strain DSM 101675 / C91 / Nm57) protein is Oxygen-dependent coproporphyrinogen-III oxidase.